The primary structure comprises 609 residues: Snake venom metalloproteinase-disintegrin-like mocarhagin (609 aa).

A signal peptide spans 1 to 20; the sequence is MIQALLVAICLAVFPYQGSS. Residues 21–191 constitute a propeptide that is removed on maturation; it reads IILESGNVND…DEPIEKSSQL (171 aa). A Peptidase M12B domain is found at 205–400; the sequence is KYIEFYVVVD…DRPQCILNKP (196 aa). Ca(2+) is bound by residues glutamate 208 and aspartate 292. Asparagine 303 carries an N-linked (GlcNAc...) asparagine glycan. 3 disulfide bridges follow: cysteine 316/cysteine 395, cysteine 356/cysteine 379, and cysteine 358/cysteine 363. Zn(2+) contacts are provided by histidine 341 and histidine 345. Ca(2+) is bound by residues cysteine 395, asparagine 398, valine 410, asparagine 413, phenylalanine 415, glutamate 417, glutamate 420, and aspartate 423. Residues 408 to 494 enclose the Disintegrin domain; it reads PPVCGNYFVE…KCPKDSFQRN (87 aa). 14 disulfides stabilise this stretch: cysteine 411–cysteine 440, cysteine 422–cysteine 435, cysteine 424–cysteine 430, cysteine 434–cysteine 457, cysteine 448–cysteine 454, cysteine 453–cysteine 479, cysteine 466–cysteine 486, cysteine 473–cysteine 505, cysteine 498–cysteine 510, cysteine 517–cysteine 567, cysteine 532–cysteine 575, cysteine 545–cysteine 555, cysteine 562–cysteine 601, and cysteine 595–cysteine 606. Positions 472–474 match the D/ECD-tripeptide motif; sequence DCD. The N-linked (GlcNAc...) asparagine glycan is linked to asparagine 507.

This sequence belongs to the venom metalloproteinase (M12B) family. P-III subfamily. P-IIIa sub-subfamily. Monomer. Zn(2+) serves as cofactor. In terms of tissue distribution, expressed by the venom gland.

It localises to the secreted. Its activity is regulated as follows. Inhibited by EDTA and diisopropyl fluorophosphate (DFP). Also inhibited by an excess of zinc or calcium ions. Functionally, snake venom zinc metalloproteinase that inhibits platelet aggregation by cleaving platelet glycoprotein Ib alpha (GP1BA) at Glu-298/Asp-299, and abolishes binding of von Willebrand factor (VWF) to GPIBA. Cleaves P-selectin glycoprotein ligand-1 (PSGL-1/SELPLG) at Tyr-51/Asp-52, and completely abolishes the binding of PSGL-1 to P-selectin. Anionic amino acid sequences containing sulfated tyrosines are needed for cleavages. Inhibits the thrombin-induced platelet aggregation, and the thrombin-induced release of ATP and ADP. Has lectin activity (inhibited by heparin). This is Snake venom metalloproteinase-disintegrin-like mocarhagin from Naja mossambica (Mozambique spitting cobra).